A 185-amino-acid polypeptide reads, in one-letter code: Putative gustatory receptor clone PTE01 (185 aa).

The helical transmembrane segment at Met1 to Ala11 threads the bilayer. Topologically, residues Asp12–Gln42 are extracellular. A helical transmembrane segment spans residues Met43–Tyr62. Residues Asp63–Gly84 are Cytoplasmic-facing. The helical transmembrane segment at Leu85–Val105 threads the bilayer. Residues Leu106–Asn138 lie on the Extracellular side of the membrane. A helical transmembrane segment spans residues Ile139–Tyr160. Residues Tyr161–Thr182 lie on the Cytoplasmic side of the membrane. Residues Cys183–Ser185 traverse the membrane as a helical segment.

Belongs to the G-protein coupled receptor 1 family. In terms of tissue distribution, tongue specific.

Its subcellular location is the cell membrane. In terms of biological role, possible taste receptor. The protein is Putative gustatory receptor clone PTE01 of Rattus norvegicus (Rat).